Reading from the N-terminus, the 214-residue chain is Ribosomal RNA small subunit methyltransferase G (214 aa).

S-adenosyl-L-methionine contacts are provided by residues G78, L83, 129–130, and R144; that span reads AE.

The protein belongs to the methyltransferase superfamily. RNA methyltransferase RsmG family.

Its subcellular location is the cytoplasm. The catalysed reaction is guanosine(527) in 16S rRNA + S-adenosyl-L-methionine = N(7)-methylguanosine(527) in 16S rRNA + S-adenosyl-L-homocysteine. Its function is as follows. Specifically methylates the N7 position of guanine in position 527 of 16S rRNA. This is Ribosomal RNA small subunit methyltransferase G from Marinobacter nauticus (strain ATCC 700491 / DSM 11845 / VT8) (Marinobacter aquaeolei).